The chain runs to 144 residues: Large ribosomal subunit protein uL16 (144 aa).

Residues 1-16 show a composition bias toward basic residues; the sequence is MLIPKRVKYRKQHRGR. Residues 1–23 form a disordered region; sequence MLIPKRVKYRKQHRGRPGGGMAK.

Belongs to the universal ribosomal protein uL16 family. Part of the 50S ribosomal subunit.

In terms of biological role, binds 23S rRNA and is also seen to make contacts with the A and possibly P site tRNAs. This is Large ribosomal subunit protein uL16 from Pelotomaculum thermopropionicum (strain DSM 13744 / JCM 10971 / SI).